The primary structure comprises 90 residues: Serine-rich and transmembrane domain-containing 2 (90 aa).

N-linked (GlcNAc...) asparagine glycosylation occurs at N11. The helical transmembrane segment at 38-58 (YVGLFLSLLAILLILLFTMLL) threads the bilayer. Residues 69-90 (SDSTESVPQFTDVEMQSRIPTP) form a disordered region.

It localises to the membrane. In Homo sapiens (Human), this protein is Serine-rich and transmembrane domain-containing 2.